Here is a 373-residue protein sequence, read N- to C-terminus: tRNA-specific 2-thiouridylase MnmA (373 aa).

Residues 12–19 and methionine 38 contribute to the ATP site; that span reads GMSGGVDS. Positions 98-100 are interaction with target base in tRNA; sequence NPD. Cysteine 103 acts as the Nucleophile in catalysis. Cysteine 103 and cysteine 200 are oxidised to a cystine. ATP is bound at residue glycine 127. The segment at 150-152 is interaction with tRNA; it reads KDQ. The active-site Cysteine persulfide intermediate is cysteine 200. Residues 312-313 are interaction with tRNA; that stretch reads RY.

Belongs to the MnmA/TRMU family.

It localises to the cytoplasm. It carries out the reaction S-sulfanyl-L-cysteinyl-[protein] + uridine(34) in tRNA + AH2 + ATP = 2-thiouridine(34) in tRNA + L-cysteinyl-[protein] + A + AMP + diphosphate + H(+). Its function is as follows. Catalyzes the 2-thiolation of uridine at the wobble position (U34) of tRNA, leading to the formation of s(2)U34. This chain is tRNA-specific 2-thiouridylase MnmA, found in Streptococcus pyogenes serotype M3 (strain SSI-1).